A 1218-amino-acid polypeptide reads, in one-letter code: MLTKFETKSNRVKGLSFHPRRPWILASLHSGVIQMWDYRMGTLLDRFDEHDGPVRGVHFHATQPLFVSGGDDYKIKVWNYKTHRCLFTLHGHLDYIRTVQFHHEYPWIVSASDDQTIRIWNWQSRTCVAVLTGHNHYVMCASFHPKEDLVVSASLDQTVRVWDIGALRKKTVSPADDILRLTQMNTDLFGGVDAVVKYVLEGHDRGVNWASFHPTLPLIVSGADDRQVKLWRMNDTKAWEVDTLRGHMNNVSCVMFHAKQDIIVSNSEDKSIRIWDATKRTGIQTFRREHDRFWILSAHPEMNLLAAGHDSGMIVFKLERERPAFSVSGDTVFYVKDRFLRFFEFTTQKEVQLAPIRRPGSVSLNQSPKTLSYSPTENAVLICSDVDGGSYELYIVPKDSAGRADYLQDAKKGAGGSAVFVARNRFAVLEKSSNQVLVKNLKNEIVKKSPLPIATDAIYYAGTGNLLCKAEDRVTIFDLQQRLILGELQAPSVKYVVWSSDMESVALLSKHAVVIANKKLVHRCTLHETIRVKSGAWDENGVFIYTTLNHIKYCLPNGDSGIIKTLDVPIYITRVIGNNIFCLDRDGKNKLVTVDASEYIFKLALLRKRYDHVMSMIKNSQLCGQAVISYLQQKGFPEVALHFVKDEKTRFNLALESGNIQIAVASAKEIDDKDHWYRLGIEALRQGNVGIVEYAYQRTKNFERLAFLYLITGYMDKVGFMCKIAGQNNNLMGQFHNALYLGDALKRVEILENAGQLPLAYITATTHGLTEIADRLAAELGENIPSLPEGKARSLLIPPAPLTASGDWPLLRVMHGIFEGGLDATGKAELEEDDEAAGADWGDEDLDMVDASEAMANGGDGFDAEEGEANEEDGEEGGWDLEDLELPPEAETPKNAGNARSAVFVAPPPGMPVSLIWTQKSSLAGEHAAAGNFDTAMRLLSRQLGIKNFAPLKPLFVDLHMGSHSYLRALATAPIIPIAVEKGWSESASPNVRGPPALVFTFPQMEDRLKAAYKATTDGKFPEALRQFLSILHTIPLIVVDSRREVDEVKELIEIVREYVLGLRMELKRKELRDDVNRQQELAAYFTNCKLQRVHMRLVLGSAMGLCYKQKNFATAEHFARMLLENNPNEAQARRARQVQQQCSGKKDSSELNYDYRNPFVVCGATYVPIYRGQKDVSCPYCGSRFVPSIEGQLCTICELAVVGADASGLLCSPTQSR.

WD repeat units follow at residues 7–48 (TKSN…DRFD), 49–88 (EHDG…CLFT), 91–132 (GHLD…AVLT), 133–172 (GHNH…KKTV), 202–241 (GHDR…AWEV), 246–285 (GHMN…GIQT), 288–326 (REHD…PAFS), 363–404 (SLNQ…AGRA), and 450–489 (PLPI…GELQ). The tract at residues 857–882 (NGGDGFDAEEGEANEEDGEEGGWDLE) is disordered. Acidic residues predominate over residues 862 to 882 (FDAEEGEANEEDGEEGGWDLE).

As to quaternary structure, oligomeric complex that consists of at least the alpha, beta, beta', gamma, delta, epsilon and zeta subunits.

The protein resides in the cytoplasm. It localises to the golgi apparatus membrane. Its subcellular location is the cytoplasmic vesicle. It is found in the COPI-coated vesicle membrane. The coatomer is a cytosolic protein complex that binds to dilysine motifs and reversibly associates with Golgi non-clathrin-coated vesicles, which further mediate biosynthetic protein transport from the ER, via the Golgi up to the trans Golgi network. Coatomer complex is required for budding from Golgi membranes, and is essential for the retrograde Golgi-to-ER transport of dilysine-tagged proteins. The polypeptide is Coatomer subunit alpha-1 (Oryza sativa subsp. japonica (Rice)).